The sequence spans 187 residues: ATP synthase subunit delta (187 aa).

It belongs to the ATPase delta chain family. As to quaternary structure, F-type ATPases have 2 components, F(1) - the catalytic core - and F(0) - the membrane proton channel. F(1) has five subunits: alpha(3), beta(3), gamma(1), delta(1), epsilon(1). F(0) has three main subunits: a(1), b(2) and c(10-14). The alpha and beta chains form an alternating ring which encloses part of the gamma chain. F(1) is attached to F(0) by a central stalk formed by the gamma and epsilon chains, while a peripheral stalk is formed by the delta and b chains.

The protein localises to the cell membrane. Functionally, f(1)F(0) ATP synthase produces ATP from ADP in the presence of a proton or sodium gradient. F-type ATPases consist of two structural domains, F(1) containing the extramembraneous catalytic core and F(0) containing the membrane proton channel, linked together by a central stalk and a peripheral stalk. During catalysis, ATP synthesis in the catalytic domain of F(1) is coupled via a rotary mechanism of the central stalk subunits to proton translocation. Its function is as follows. This protein is part of the stalk that links CF(0) to CF(1). It either transmits conformational changes from CF(0) to CF(1) or is implicated in proton conduction. The sequence is that of ATP synthase subunit delta from Mesomycoplasma hyopneumoniae (strain J / ATCC 25934 / NCTC 10110) (Mycoplasma hyopneumoniae).